The chain runs to 175 residues: GTP-dependent dephospho-CoA kinase (175 aa).

Residues aspartate 48, valine 49, valine 50, aspartate 66, and glutamate 124 each contribute to the GTP site.

Belongs to the GTP-dependent DPCK family.

It carries out the reaction 3'-dephospho-CoA + GTP = GDP + CoA + H(+). It participates in cofactor biosynthesis; coenzyme A biosynthesis. Its function is as follows. Catalyzes the GTP-dependent phosphorylation of the 3'-hydroxyl group of dephosphocoenzyme A to form coenzyme A (CoA). This chain is GTP-dependent dephospho-CoA kinase, found in Thermofilum pendens (strain DSM 2475 / Hrk 5).